Here is a 287-residue protein sequence, read N- to C-terminus: Ribosomal RNA small subunit methyltransferase A (287 aa).

Residues Asn28, Leu30, Gly55, Glu76, Asp101, and Asn125 each contribute to the S-adenosyl-L-methionine site.

Belongs to the class I-like SAM-binding methyltransferase superfamily. rRNA adenine N(6)-methyltransferase family. RsmA subfamily.

It localises to the cytoplasm. The catalysed reaction is adenosine(1518)/adenosine(1519) in 16S rRNA + 4 S-adenosyl-L-methionine = N(6)-dimethyladenosine(1518)/N(6)-dimethyladenosine(1519) in 16S rRNA + 4 S-adenosyl-L-homocysteine + 4 H(+). Functionally, specifically dimethylates two adjacent adenosines (A1518 and A1519) in the loop of a conserved hairpin near the 3'-end of 16S rRNA in the 30S particle. May play a critical role in biogenesis of 30S subunits. This Alkaliphilus oremlandii (strain OhILAs) (Clostridium oremlandii (strain OhILAs)) protein is Ribosomal RNA small subunit methyltransferase A.